Here is a 301-residue protein sequence, read N- to C-terminus: Probable alpha-L-glutamate ligase (301 aa).

Residues 104–287 form the ATP-grasp domain; that stretch reads TQLLARKGIG…IAGTIYAFLE (184 aa). Residues Lys-141, 178–179, Asp-187, and 211–213 each bind ATP; these read EY and RSN. Mg(2+) contacts are provided by Asp-248, Glu-260, and Asn-262. Asp-248, Glu-260, and Asn-262 together coordinate Mn(2+).

This sequence belongs to the RimK family. Mg(2+) is required as a cofactor. The cofactor is Mn(2+).

The polypeptide is Probable alpha-L-glutamate ligase (Alkalilimnicola ehrlichii (strain ATCC BAA-1101 / DSM 17681 / MLHE-1)).